Here is a 400-residue protein sequence, read N- to C-terminus: Large envelope protein (400 aa).

N-acetylmethionine is present on M1. A lipid anchor (N-myristoyl glycine; by host) is attached at G2. Residues G2–A119 form a pre-S1 region. Residues G2–N174 are pre-S. The Virion surface; in external conformation segment spans residues G2–G181. Residues G2 to R253 lie on the Intravirion; in internal conformation side of the membrane. P4 is a glycosylation site (N-linked (GlcNAc...) asparagine). Residues V84–P110 are disordered. The span at S96–S109 shows a compositional bias: polar residues. The pre-S2 stretch occupies residues M120–N174. Residues L182–I202 traverse the membrane as a helical segment. Over P203 to R253 the chain is Intravirion; in external conformation. Residues F254–Y274 traverse the membrane as a helical segment. At Q275–S348 the chain is on the virion surface side. An N-linked (GlcNAc...) asparagine; by host glycan is attached at N320. The chain crosses the membrane as a helical span at residues L349–I369. The Intravirion segment spans residues W370–W375. The helical transmembrane segment at G376–V398 threads the bilayer. The Virion surface segment spans residues S399 to I400.

Belongs to the orthohepadnavirus major surface antigen family. In terms of assembly, in its internal form (Li-HBsAg), interacts with the capsid protein and with the isoform S. Interacts with host chaperone CANX. As to quaternary structure, associates with host chaperone CANX through its pre-S2 N glycan; this association may be essential for isoform M proper secretion. Interacts with isoform L. Interacts with the antigens of satellite virus HDV (HDVAgs); this interaction is required for encapsidation of HDV genomic RNA. In terms of processing, isoform M is N-terminally acetylated by host at a ratio of 90%, and N-glycosylated by host at the pre-S2 region. Myristoylated.

The protein localises to the virion membrane. The large envelope protein exists in two topological conformations, one which is termed 'external' or Le-HBsAg and the other 'internal' or Li-HBsAg. In its external conformation the protein attaches the virus to cell receptors and thereby initiating infection. This interaction determines the species specificity and liver tropism. This attachment induces virion internalization predominantly through caveolin-mediated endocytosis. The large envelope protein also assures fusion between virion membrane and endosomal membrane. In its internal conformation the protein plays a role in virion morphogenesis and mediates the contact with the nucleocapsid like a matrix protein. Functionally, the middle envelope protein plays an important role in the budding of the virion. It is involved in the induction of budding in a nucleocapsid independent way. In this process the majority of envelope proteins bud to form subviral lipoprotein particles of 22 nm of diameter that do not contain a nucleocapsid. This is Large envelope protein from Homo sapiens (Human).